The primary structure comprises 192 residues: Shikimate kinase (192 aa).

Residue 32–37 (GAGKSA) coordinates ATP. S36 contributes to the Mg(2+) binding site. Substrate-binding residues include D54, R78, and G100. R138 contacts ATP. R157 contributes to the substrate binding site.

Belongs to the shikimate kinase family. In terms of assembly, monomer. Mg(2+) is required as a cofactor.

Its subcellular location is the cytoplasm. The catalysed reaction is shikimate + ATP = 3-phosphoshikimate + ADP + H(+). The protein operates within metabolic intermediate biosynthesis; chorismate biosynthesis; chorismate from D-erythrose 4-phosphate and phosphoenolpyruvate: step 5/7. Catalyzes the specific phosphorylation of the 3-hydroxyl group of shikimic acid using ATP as a cosubstrate. The chain is Shikimate kinase from Rhizobium meliloti (strain 1021) (Ensifer meliloti).